The chain runs to 285 residues: 2-dehydro-3-deoxyphosphooctonate aldolase (285 aa).

The protein belongs to the KdsA family.

It is found in the cytoplasm. The catalysed reaction is D-arabinose 5-phosphate + phosphoenolpyruvate + H2O = 3-deoxy-alpha-D-manno-2-octulosonate-8-phosphate + phosphate. The protein operates within carbohydrate biosynthesis; 3-deoxy-D-manno-octulosonate biosynthesis; 3-deoxy-D-manno-octulosonate from D-ribulose 5-phosphate: step 2/3. It participates in bacterial outer membrane biogenesis; lipopolysaccharide biosynthesis. This chain is 2-dehydro-3-deoxyphosphooctonate aldolase, found in Delftia acidovorans (strain DSM 14801 / SPH-1).